We begin with the raw amino-acid sequence, 182 residues long: UPF0397 protein SAG1634 (182 aa).

5 consecutive transmembrane segments (helical) span residues 9-29, 42-62, 74-94, 109-129, and 148-168; these read VVAT…VNIP, AVLA…TGFI, SPWW…GFFA, LLLF…VVAP, and FLSS…LLLA.

The protein belongs to the UPF0397 family.

It localises to the cell membrane. The polypeptide is UPF0397 protein SAG1634 (Streptococcus agalactiae serotype V (strain ATCC BAA-611 / 2603 V/R)).